Reading from the N-terminus, the 228-residue chain is Ribosomal RNA large subunit methyltransferase E (228 aa).

S-adenosyl-L-methionine is bound by residues glycine 76, tryptophan 78, aspartate 99, aspartate 115, and aspartate 139. The active-site Proton acceptor is lysine 179.

The protein belongs to the class I-like SAM-binding methyltransferase superfamily. RNA methyltransferase RlmE family.

Its subcellular location is the cytoplasm. It catalyses the reaction uridine(2552) in 23S rRNA + S-adenosyl-L-methionine = 2'-O-methyluridine(2552) in 23S rRNA + S-adenosyl-L-homocysteine + H(+). In terms of biological role, specifically methylates the uridine in position 2552 of 23S rRNA at the 2'-O position of the ribose in the fully assembled 50S ribosomal subunit. The chain is Ribosomal RNA large subunit methyltransferase E from Nitrobacter hamburgensis (strain DSM 10229 / NCIMB 13809 / X14).